The following is a 305-amino-acid chain: Olfactory receptor 5M11 (305 aa).

Topologically, residues 1-25 (MSNTNGSAITEFILLGLTDCPELQS) are extracellular. N-linked (GlcNAc...) asparagine glycosylation is present at N5. Residues 26 to 46 (LLFVLFLVVYLVTLLGNLGMI) form a helical membrane-spanning segment. Residues 47-54 (MLMRLDSR) are Cytoplasmic-facing. The chain crosses the membrane as a helical span at residues 55–75 (LHTPMYFFLTNLAFVDLCYTS). The Extracellular segment spans residues 76-98 (NATPQMSTNIVSEKTISFAGCFT). C96 and C188 are disulfide-bonded. A helical transmembrane segment spans residues 99 to 119 (QCYIFIALLLTEFYMLAAMAY). Residues 120–138 (DRYVAIYDPLRYSVKTSRR) lie on the Cytoplasmic side of the membrane. A helical transmembrane segment spans residues 139 to 159 (VCICLATFPYVYGFSDGLFQA). Over 160 to 195 (ILTFRLTFCRSSVINHFYCADPPLIKLSCSDTYVKE) the chain is Extracellular. Residues 196-216 (HAMFISAGFNLSSSLTIVLVS) form a helical membrane-spanning segment. At 217–236 (YAFILAAILRIKSAEGRHKA) the chain is on the cytoplasmic side. Residues 237-257 (FSTCGSHMMAVTLFYGTLFCM) traverse the membrane as a helical segment. Residues 258–270 (YIRPPTDKTVEES) are Extracellular-facing. Residues 271-291 (KIIAVFYTFVSPVLNPLIYSL) traverse the membrane as a helical segment. Residues 292-305 (RNKDVKQALKNVLR) are Cytoplasmic-facing.

It belongs to the G-protein coupled receptor 1 family.

Its subcellular location is the cell membrane. Functionally, odorant receptor. The polypeptide is Olfactory receptor 5M11 (OR5M11) (Homo sapiens (Human)).